The chain runs to 178 residues: Oligoribonuclease (178 aa).

The region spanning 7–168 (LIWIDLEMTG…DDIRESIAEL (162 aa)) is the Exonuclease domain. The active site involves Tyr128.

This sequence belongs to the oligoribonuclease family.

It is found in the cytoplasm. Its function is as follows. 3'-to-5' exoribonuclease specific for small oligoribonucleotides. This chain is Oligoribonuclease, found in Francisella tularensis subsp. novicida (strain U112).